The following is a 247-amino-acid chain: Type III pantothenate kinase (247 aa).

7–14 (AIGNSRWH) contacts ATP. Residues Tyr91 and 95 to 98 (GLDR) contribute to the substrate site. Asp97 acts as the Proton acceptor in catalysis. Residue Asp117 participates in K(+) binding. An ATP-binding site is contributed by Thr120.

Belongs to the type III pantothenate kinase family. As to quaternary structure, homodimer. The cofactor is NH4(+). Requires K(+) as cofactor.

It localises to the cytoplasm. The enzyme catalyses (R)-pantothenate + ATP = (R)-4'-phosphopantothenate + ADP + H(+). The protein operates within cofactor biosynthesis; coenzyme A biosynthesis; CoA from (R)-pantothenate: step 1/5. Its function is as follows. Catalyzes the phosphorylation of pantothenate (Pan), the first step in CoA biosynthesis. This is Type III pantothenate kinase from Synechococcus sp. (strain ATCC 27144 / PCC 6301 / SAUG 1402/1) (Anacystis nidulans).